The chain runs to 603 residues: ATP-dependent zinc metalloprotease FtsH (603 aa).

At 1–2 the chain is on the stromal side; it reads MK. A helical membrane pass occupies residues 3–23; sequence NLWIWSLPLIVLAFIGWQELA. At 24–101 the chain is on the lumenal side; the sequence is NQMPVATSRM…DVDVHAVSNW (78 aa). Residues 102 to 122 form a helical membrane-spanning segment; sequence INVASNWIIPLIIIGVVIWLL. The Stromal segment spans residues 123 to 603; that stretch reads SRSASSNTTG…SQAARLTAVN (481 aa). Residue 194–201 coordinates ATP; the sequence is GPPGTGKT. Histidine 415 is a binding site for Zn(2+). The active site involves glutamate 416. Residues histidine 419 and aspartate 493 each coordinate Zn(2+).

In the central section; belongs to the AAA ATPase family. This sequence in the C-terminal section; belongs to the peptidase M41 family. Homohexamer. Requires Zn(2+) as cofactor.

Its subcellular location is the plastid. The protein resides in the chloroplast thylakoid membrane. Acts as a processive, ATP-dependent zinc metallopeptidase. The sequence is that of ATP-dependent zinc metalloprotease FtsH from Cyanidioschyzon merolae (strain NIES-3377 / 10D) (Unicellular red alga).